The primary structure comprises 298 residues: Ribosomal RNA processing protein 36 homolog (298 aa).

The disordered stretch occupies residues 1–131 (MKPDIIKKRR…SDAPVEMTAM (131 aa)). The segment covering 14–56 (SDDEDEYNEEDEMYEDDNNNYEEDEDDDDDDDEDDEDDDENEE) has biased composition (acidic residues). Polar residues-rich tracts occupy residues 61–70 (QQLSNVSFSS) and 83–92 (LNLNTITKNL). 2 coiled-coil regions span residues 88 to 112 (ITKNLQQQKSFKKEEQQEKEEMNSK) and 196 to 228 (RERDQLYKKIQSKKSQLKTQQLKDQKRETKNKL). Residues 98–111 (FKKEEQQEKEEMNS) are compositionally biased toward basic and acidic residues. Positions 279–298 (ISSKEKTFLPQRRSFDQDEN) are disordered.

The protein belongs to the RRP36 family.

It localises to the nucleus. The protein localises to the nucleolus. Functionally, involved in the early processing steps of the pre-rRNA in the maturation pathway leading to the 18S rRNA. This chain is Ribosomal RNA processing protein 36 homolog, found in Dictyostelium discoideum (Social amoeba).